A 138-amino-acid chain; its full sequence is Basic phospholipase A2 homolog acutohaemolysin (138 aa).

The first 16 residues, 1–16 (MRALWIVAVLLVGVEG), serve as a signal peptide directing secretion. Disulfide bonds link Cys42–Cys131, Cys44–Cys60, Cys59–Cys111, Cys65–Cys138, Cys66–Cys104, Cys73–Cys97, and Cys91–Cys102. The important for membrane-damaging activities in eukaryotes and bacteria; heparin-binding stretch occupies residues 121 to 133 (KSFRYHLKPSCKK).

In terms of assembly, monomer. As to expression, expressed by the venom gland.

It is found in the secreted. Snake venom phospholipase A2 homolog that lacks enzymatic activity. Is myotoxic. Has a strong indirect hemolytic activity and anticoagulant activity. A model of myotoxic mechanism has been proposed: an apo Lys49-PLA2 is activated by the entrance of a hydrophobic molecule (e.g. fatty acid) at the hydrophobic channel of the protein leading to a reorientation of a monomer. This reorientation causes a transition between 'inactive' to 'active' states, causing alignment of C-terminal and membrane-docking sites (MDoS) side-by-side and putting the membrane-disruption sites (MDiS) in the same plane, exposed to solvent and in a symmetric position for both monomers. The MDoS region stabilizes the toxin on membrane by the interaction of charged residues with phospholipid head groups. Subsequently, the MDiS region destabilizes the membrane with penetration of hydrophobic residues. This insertion causes a disorganization of the membrane, allowing an uncontrolled influx of ions (i.e. calcium and sodium), and eventually triggering irreversible intracellular alterations and cell death. The chain is Basic phospholipase A2 homolog acutohaemolysin from Deinagkistrodon acutus (Hundred-pace snake).